Reading from the N-terminus, the 382-residue chain is Carbamoyl phosphate synthase small chain (382 aa).

The CPSase stretch occupies residues 1 to 189 (MIKSALLVLE…ELPAAKNESE (189 aa)). 3 residues coordinate L-glutamine: Ser-47, Gly-241, and Gly-243. The region spanning 193 to 380 (HVVAYDYGVK…IDLIQTYRSS (188 aa)) is the Glutamine amidotransferase type-1 domain. The active-site Nucleophile is the Cys-269. Residues Leu-270, Gln-273, Asn-311, Gly-313, and Phe-314 each contribute to the L-glutamine site. Catalysis depends on residues His-353 and Glu-355.

The protein belongs to the CarA family. As to quaternary structure, composed of two chains; the small (or glutamine) chain promotes the hydrolysis of glutamine to ammonia, which is used by the large (or ammonia) chain to synthesize carbamoyl phosphate. Tetramer of heterodimers (alpha,beta)4.

It carries out the reaction hydrogencarbonate + L-glutamine + 2 ATP + H2O = carbamoyl phosphate + L-glutamate + 2 ADP + phosphate + 2 H(+). The enzyme catalyses L-glutamine + H2O = L-glutamate + NH4(+). It functions in the pathway amino-acid biosynthesis; L-arginine biosynthesis; carbamoyl phosphate from bicarbonate: step 1/1. It participates in pyrimidine metabolism; UMP biosynthesis via de novo pathway; (S)-dihydroorotate from bicarbonate: step 1/3. In terms of biological role, small subunit of the glutamine-dependent carbamoyl phosphate synthetase (CPSase). CPSase catalyzes the formation of carbamoyl phosphate from the ammonia moiety of glutamine, carbonate, and phosphate donated by ATP, constituting the first step of 2 biosynthetic pathways, one leading to arginine and/or urea and the other to pyrimidine nucleotides. The small subunit (glutamine amidotransferase) binds and cleaves glutamine to supply the large subunit with the substrate ammonia. The sequence is that of Carbamoyl phosphate synthase small chain from Pectobacterium atrosepticum (strain SCRI 1043 / ATCC BAA-672) (Erwinia carotovora subsp. atroseptica).